The chain runs to 138 residues: Small ribosomal subunit protein uS11c (138 aa).

The interval 1–23 (MAKPIPRIGSRKNGRIGSRKSGR) is disordered. Residues 9 to 23 (GSRKNGRIGSRKSGR) show a composition bias toward basic residues.

This sequence belongs to the universal ribosomal protein uS11 family. In terms of assembly, part of the 30S ribosomal subunit.

It localises to the plastid. The protein localises to the chloroplast. In Buxus microphylla (Littleleaf boxwood), this protein is Small ribosomal subunit protein uS11c.